Reading from the N-terminus, the 237-residue chain is Ribonuclease PH (237 aa).

Residues Arg86 and 124–126 (GTR) each bind phosphate.

It belongs to the RNase PH family. In terms of assembly, homohexameric ring arranged as a trimer of dimers.

The enzyme catalyses tRNA(n+1) + phosphate = tRNA(n) + a ribonucleoside 5'-diphosphate. Its function is as follows. Phosphorolytic 3'-5' exoribonuclease that plays an important role in tRNA 3'-end maturation. Removes nucleotide residues following the 3'-CCA terminus of tRNAs; can also add nucleotides to the ends of RNA molecules by using nucleoside diphosphates as substrates, but this may not be physiologically important. Probably plays a role in initiation of 16S rRNA degradation (leading to ribosome degradation) during starvation. The sequence is that of Ribonuclease PH from Methylorubrum extorquens (strain PA1) (Methylobacterium extorquens).